A 75-amino-acid chain; its full sequence is UPF0512 protein C (75 aa).

The protein belongs to the UPF0512 family.

The chain is UPF0512 protein C from Dictyostelium discoideum (Social amoeba).